Consider the following 276-residue polypeptide: Beta-lactamase OXA-1 (276 aa).

Positions Met1–Ala25 are cleaved as a signal peptide. Ser71 acts as the Acyl-ester intermediate in catalysis. A beta-lactam-binding residues include Ser71, Lys74, Ser118, Thr216, and Ala218. Lys74 carries the N6-carboxylysine modification.

It belongs to the class-D beta-lactamase family. In terms of assembly, monomer.

It is found in the periplasm. The catalysed reaction is a beta-lactam + H2O = a substituted beta-amino acid. Inhibited by penicillin sulfones. Only weakly inhibited by clavulanic acid and sulbactam. Class D beta-lactamase which confers resistance to the beta-lactam antibiotics, including amoxicillin and ticarcillin. Acts via hydrolysis of the beta-lactam ring. Has penicillin- and cephalosporin-hydrolyzing activities. This Escherichia coli protein is Beta-lactamase OXA-1.